The sequence spans 332 residues: MQSWVNKLWYDGHVLRFALWPLSLLFAAITWFRRQLYAVGLKPQATFPVPVIIVGNITVGGSGKTPTVIYLIELLRKHGYKPGVISRGYGVQIDGVRSVYPSNNANQVGDEPAMIVARTNIPMVVGAKRIDAAQQLLNDFDVDIIISDDGLQHYALARDIELIILDGERRLGNGMLLPAGPLREGGWRAAAVDHVIVNGGEAQSGEQQMLLQPTLWHSVNGKQSPDTAPEPEQDVVAMAGIGNPSRFFDTLADMGYRLDKVQAFDDHSAYSEATLTALAGELPLLMTEKDAVKCREFAKDNWWYLAVDAKLPHSFDQQLLTRVKQVVEEKQR.

Position 58–65 (58–65) interacts with ATP; the sequence is TVGGSGKT.

This sequence belongs to the LpxK family.

The enzyme catalyses a lipid A disaccharide + ATP = a lipid IVA + ADP + H(+). It functions in the pathway glycolipid biosynthesis; lipid IV(A) biosynthesis; lipid IV(A) from (3R)-3-hydroxytetradecanoyl-[acyl-carrier-protein] and UDP-N-acetyl-alpha-D-glucosamine: step 6/6. Its function is as follows. Transfers the gamma-phosphate of ATP to the 4'-position of a tetraacyldisaccharide 1-phosphate intermediate (termed DS-1-P) to form tetraacyldisaccharide 1,4'-bis-phosphate (lipid IVA). The polypeptide is Tetraacyldisaccharide 4'-kinase (Shewanella piezotolerans (strain WP3 / JCM 13877)).